The following is a 269-amino-acid chain: DNA-binding protein RFXANK (269 aa).

The tract at residues 1 to 36 (MEPTQVAENLVPNQQPPVPDLEDPEDTRDESPENSD) is disordered. ANK repeat units follow at residues 88-127 (LDSL…NLIN), 132-161 (RGFT…DPHI), 165-194 (ERES…DINI), 198-227 (NGGT…DLTT), and 231-260 (SGYT…RLFQ).

In terms of assembly, forms homodimers. The RFX heterotetrameric complex consists of 2 molecules of RFX5 and one each of RFXAP and RFX-B/RFXANK; with each subunit representing a separate complementation group. Interacts (via ankyrin repeats) with RFX5 (via PxLPxI/L motif); the interaction is direct. RFX forms cooperative DNA binding complexes with X2BP and CBF/NF-Y. RFX associates with CIITA to form an active transcriptional complex. Interacts with RAF1. Interacts with RFX7. Post-translationally, phosphorylated by RAF1. Expressed primarily in thymus, lung and testis.

Its subcellular location is the cytoplasm. The protein resides in the nucleus. Functionally, activates transcription from class II MHC promoters. Activation requires the activity of the MHC class II transactivator/CIITA. May regulate other genes in the cell. RFX binds the X1 box of MHC-II promoters. May also potentiate the activation of RAF1. This is DNA-binding protein RFXANK (Rfxank) from Mus musculus (Mouse).